The following is a 131-amino-acid chain: Hypocretin neuropeptide precursor (131 aa).

Residue Gln34 is modified to Pyrrolidone carboxylic acid. Intrachain disulfides connect Cys39/Cys45 and Cys40/Cys47. Position 66 is a leucine amide (Leu66). The segment at 104-131 (EPALRPCSGRRCPSEAASSVAPGGRSGV) is disordered.

It belongs to the orexin family.

The protein resides in the rough endoplasmic reticulum. It localises to the cytoplasmic vesicle. The protein localises to the synapse. Neuropeptides that play a significant role in the regulation of food intake and sleep-wakefulness, possibly by coordinating the complex behavioral and physiologic responses of these complementary homeostatic functions. A broader role in the homeostatic regulation of energy metabolism, autonomic function, hormonal balance and the regulation of body fluids, is also suggested. Its function is as follows. Binds to orexin receptors HCRTR1/OX1R and HCRTR2/OX2R with a high affinity. Stimulates food intake. Modulates pituitary luteinizing hormone secretion in an ovarian steroid-dependent manner. Functionally, binds to orexin receptor HCRTR2/OX2R only. Stimulates food intake. Modulates pituitary luteinizing hormone secretion in an ovarian steroid-dependent manner. This chain is Hypocretin neuropeptide precursor (HCRT), found in Bos taurus (Bovine).